The chain runs to 709 residues: Phosphoribosylformylglycinamidine synthase subunit PurL (709 aa).

The active site involves His-36. The ATP site is built by Tyr-39 and Lys-80. Glu-82 lines the Mg(2+) pocket. Substrate-binding positions include 83–86 (SHNH) and Arg-105. His-84 acts as the Proton acceptor in catalysis. Position 106 (Asp-106) interacts with Mg(2+). Residue Gln-226 participates in substrate binding. Asp-252 contacts Mg(2+). 294–296 (ETQ) provides a ligand contact to substrate. Asp-470 and Gly-507 together coordinate ATP. Residue Ser-510 coordinates substrate.

Belongs to the FGAMS family. Monomer. Part of the FGAM synthase complex composed of 1 PurL, 1 PurQ and 2 PurS subunits.

It localises to the cytoplasm. The enzyme catalyses N(2)-formyl-N(1)-(5-phospho-beta-D-ribosyl)glycinamide + L-glutamine + ATP + H2O = 2-formamido-N(1)-(5-O-phospho-beta-D-ribosyl)acetamidine + L-glutamate + ADP + phosphate + H(+). Its pathway is purine metabolism; IMP biosynthesis via de novo pathway; 5-amino-1-(5-phospho-D-ribosyl)imidazole from N(2)-formyl-N(1)-(5-phospho-D-ribosyl)glycinamide: step 1/2. Functionally, part of the phosphoribosylformylglycinamidine synthase complex involved in the purines biosynthetic pathway. Catalyzes the ATP-dependent conversion of formylglycinamide ribonucleotide (FGAR) and glutamine to yield formylglycinamidine ribonucleotide (FGAM) and glutamate. The FGAM synthase complex is composed of three subunits. PurQ produces an ammonia molecule by converting glutamine to glutamate. PurL transfers the ammonia molecule to FGAR to form FGAM in an ATP-dependent manner. PurS interacts with PurQ and PurL and is thought to assist in the transfer of the ammonia molecule from PurQ to PurL. The polypeptide is Phosphoribosylformylglycinamidine synthase subunit PurL (Saccharolobus solfataricus (strain ATCC 35092 / DSM 1617 / JCM 11322 / P2) (Sulfolobus solfataricus)).